Reading from the N-terminus, the 404-residue chain is Cysteine desulfurase IscS (404 aa).

Pyridoxal 5'-phosphate is bound by residues alanine 75–threonine 76, asparagine 155, glutamine 183, and serine 203–histidine 205. Lysine 206 is modified (N6-(pyridoxal phosphate)lysine). Threonine 243 is a pyridoxal 5'-phosphate binding site. Cysteine 328 (cysteine persulfide intermediate) is an active-site residue. Cysteine 328 is a [2Fe-2S] cluster binding site.

The protein belongs to the class-V pyridoxal-phosphate-dependent aminotransferase family. NifS/IscS subfamily. Homodimer. Forms a heterotetramer with IscU, interacts with other sulfur acceptors. Pyridoxal 5'-phosphate serves as cofactor.

It localises to the cytoplasm. It carries out the reaction (sulfur carrier)-H + L-cysteine = (sulfur carrier)-SH + L-alanine. It participates in cofactor biosynthesis; iron-sulfur cluster biosynthesis. Master enzyme that delivers sulfur to a number of partners involved in Fe-S cluster assembly, tRNA modification or cofactor biosynthesis. Catalyzes the removal of elemental sulfur atoms from cysteine to produce alanine. Functions as a sulfur delivery protein for Fe-S cluster synthesis onto IscU, an Fe-S scaffold assembly protein, as well as other S acceptor proteins. This is Cysteine desulfurase IscS from Shewanella woodyi (strain ATCC 51908 / MS32).